The primary structure comprises 152 residues: uncharacterized protein (152 aa).

The first 16 residues, 1–16 (MRKLLISLALAIPVFA), serve as a signal peptide directing secretion. A Cytochrome c domain is found at 20–135 (NLLQKGYEVY…AVAYWLYHNY (116 aa)). Residues cysteine 33, cysteine 36, and histidine 37 each coordinate heme c.

This is an uncharacterized protein from Aquifex aeolicus (strain VF5).